We begin with the raw amino-acid sequence, 203 residues long: Large ribosomal subunit protein uL18 (203 aa).

The protein belongs to the universal ribosomal protein uL18 family. Part of the 50S ribosomal subunit. Contacts the 5S and 23S rRNAs.

Functionally, this is one of the proteins that bind and probably mediate the attachment of the 5S RNA into the large ribosomal subunit, where it forms part of the central protuberance. The sequence is that of Large ribosomal subunit protein uL18 from Pyrococcus abyssi (strain GE5 / Orsay).